The sequence spans 120 residues: Late histone H2A.2.2 (120 aa).

The segment covering 1-18 has biased composition (basic residues); the sequence is MSGRGKGAKSKSKAKSRS. The disordered stretch occupies residues 1-22; the sequence is MSGRGKGAKSKSKAKSRSSRAG. S2 is subject to N-acetylserine. Residue S2 is modified to Phosphoserine. Position 104 is an N5-methylglutamine (Q104). K119 participates in a covalent cross-link: Glycyl lysine isopeptide (Lys-Gly) (interchain with G-Cter in ubiquitin).

This sequence belongs to the histone H2A family. The nucleosome is a histone octamer containing two molecules each of H2A, H2B, H3 and H4 assembled in one H3-H4 heterotetramer and two H2A-H2B heterodimers. The octamer wraps approximately 147 bp of DNA. In terms of processing, monoubiquitination of Lys-119 gives a specific tag for epigenetic transcriptional repression. Post-translationally, phosphorylation of Ser-2 directly represses transcription.

The protein localises to the nucleus. The protein resides in the chromosome. Functionally, core component of nucleosome. Nucleosomes wrap and compact DNA into chromatin, limiting DNA accessibility to the cellular machineries which require DNA as a template. Histones thereby play a central role in transcription regulation, DNA repair, DNA replication and chromosomal stability. DNA accessibility is regulated via a complex set of post-translational modifications of histones, also called histone code, and nucleosome remodeling. In Psammechinus miliaris (Green sea urchin), this protein is Late histone H2A.2.2.